Reading from the N-terminus, the 847-residue chain is MHLLGPWLLLLVLEYLAFSDSSKWVFEHPETLYAWEGACVWIPCTYRALDGDLESFILFHNPEYNKNTSKFDGTRLYESTKDGKVPSEQKRVQFLGDKNKNCTLSIHPVHLNDSGQLGLRMESKTEKWMERIHLNVSERPFPPHIQLPPEIQESQEVTLTCLLNFSCYGYPIQLQWLLEGVPMRQAAVTSTSLTIKSVFTRSELKFSPQWSHHGKIVTCQLQDADGKFLSNDTVQLNVKHTPKLEIKVTPSDAIVREGDSVTMTCEVSSSNPEYTTVSWLKDGTSLKKQNTFTLNLREVTKDQSGKYCCQVSNDVGPGRSEEVFLQVQYAPEPSTVQILHSPAVEGSQVEFLCMSLANPLPTNYTWYHNGKEMQGRTEEKVHIPKILPWHAGTYSCVAENILGTGQRGPGAELDVQYPPKKVTTVIQNPMPIREGDTVTLSCNYNSSNPSVTRYEWKPHGAWEEPSLGVLKIQNVGWDNTTIACAACNSWCSWASPVALNVQYAPRDVRVRKIKPLSEIHSGNSVSLQCDFSSSHPKEVQFFWEKNGRLLGKESQLNFDSISPEDAGSYSCWVNNSIGQTASKAWTLEVLYAPRRLRVSMSPGDQVMEGKSATLTCESDANPPVSHYTWFDWNNQSLPYHSQKLRLEPVKVQHSGAYWCQGTNSVGKGRSPLSTLTVYYSPETIGRRVAVGLGSCLAILILAICGLKLQRRWKRTQSQQGLQENSSGQSFFVRNKKVRRAPLSEGPHSLGCYNPMMEDGISYTTLRFPEMNIPRTGDAESSEMQRPPPDCDDTVTYSALHKRQVGDYENVIPDFPEDEGIHYSELIQFGVGERPQAQENVDYVILKH.

The N-terminal stretch at 1–19 (MHLLGPWLLLLVLEYLAFS) is a signal peptide. The 119-residue stretch at 20-138 (DSSKWVFEHP…MERIHLNVSE (119 aa)) folds into the Ig-like V-type domain. Over 20–687 (DSSKWVFEHP…YYSPETIGRR (668 aa)) the chain is Extracellular. 3 disulfides stabilise this stretch: Cys-39/Cys-167, Cys-44/Cys-102, and Cys-161/Cys-219. Asn-67, Asn-101, and Asn-112 each carry an N-linked (GlcNAc...) asparagine glycan. Arg-120 contacts N-acetylneuraminate. N-linked (GlcNAc...) asparagine glycans are attached at residues Asn-135, Asn-164, and Asn-231. Ig-like C2-type domains lie at 143–235 (PHIQ…DTVQ), 242–326 (PKLE…VFLQ), 331–416 (PEPS…LDVQ), 419–500 (PKKV…VALN), 505–582 (PRDV…QTAS), and 593–676 (PRRL…STLT). 4 cysteine pairs are disulfide-bonded: Cys-265–Cys-309, Cys-353–Cys-396, Cys-442–Cys-484, and Cys-529–Cys-571. Residues Asn-363, Asn-445, and Asn-479 are each glycosylated (N-linked (GlcNAc...) asparagine). 2 N-linked (GlcNAc...) asparagine glycosylation sites follow: Asn-574 and Asn-634. Cysteines 616 and 659 form a disulfide. The helical transmembrane segment at 688-706 (VAVGLGSCLAILILAICGL) threads the bilayer. Over 707–847 (KLQRRWKRTQ…ENVDYVILKH (141 aa)) the chain is Cytoplasmic. Phosphoserine is present on residues Ser-725, Ser-726, and Ser-729. Short sequence motifs (ITIM motif) lie at residues 760-765 (ISYTTL) and 794-799 (VTYSAL). Tyr-762 is modified (phosphotyrosine). Phosphotyrosine is present on residues Tyr-807, Tyr-822, and Tyr-842. 2 short sequence motifs (ITIM motif) span residues 820 to 825 (IHYSEL) and 840 to 845 (VDYVIL).

It belongs to the immunoglobulin superfamily. SIGLEC (sialic acid binding Ig-like lectin) family. In terms of assembly, predominantly monomer of isoform CD22-beta. Also found as heterodimer of isoform CD22-beta and a shorter isoform. Interacts with PTPN6/SHP-1, LYN, SYK, PIK3R1/PIK3R2 and PLCG1 upon phosphorylation. Interacts with GRB2, INPP5D and SHC1 upon phosphorylation. May form a complex with INPP5D/SHIP, GRB2 and SHC1. In terms of processing, phosphorylation of Tyr-762, Tyr-807 and Tyr-822 are involved in binding to SYK, GRB2 and SYK, respectively. Phosphorylation of Tyr-842 is involved in binding to SYK, PLCG2 and PIK3R1/PIK3R2. Post-translationally, phosphorylated on tyrosine residues by LYN. In terms of tissue distribution, B-lymphocytes.

The protein localises to the cell membrane. Most highly expressed siglec (sialic acid-binding immunoglobulin-like lectin) on B-cells that plays a role in various aspects of B-cell biology including differentiation, antigen presentation, and trafficking to bone marrow. Binds to alpha 2,6-linked sialic acid residues of surface molecules such as CD22 itself, CD45 and IgM in a cis configuration. Can also bind to ligands on other cells as an adhesion molecule in a trans configuration. Acts as an inhibitory coreceptor on the surface of B-cells and inhibits B-cell receptor induced signaling, characterized by inhibition of the calcium mobilization and cellular activation. Mechanistically, the immunoreceptor tyrosine-based inhibitory motif domain is phosphorylated by the Src kinase LYN, which in turn leads to the recruitment of the protein tyrosine phosphatase 1/PTPN6, leading to the negative regulation of BCR signaling. If this negative signaling from is of sufficient strength, apoptosis of the B-cell can be induced. The chain is B-cell receptor CD22 from Homo sapiens (Human).